The chain runs to 377 residues: Stimulator of interferon genes protein 7 (377 aa).

The next 4 helical transmembrane spans lie at threonine 30–valine 50, threonine 57–leucine 77, phenylalanine 106–cysteine 126, and phenylalanine 141–leucine 161.

It belongs to the STING family.

The protein localises to the membrane. Its function is as follows. Facilitator of innate immune signaling that acts as a sensor of second messenger signals produced by cyclic GMP-AMP synthase-like receptors (cGLRs) and promotes the production of type I interferon. Innate immune response is triggered in response to nucleotides from viruses and bacteria delivered to the cytoplasm. Acts by binding cyclic dinucleotides: recognizes and binds a large variety of 2'-3'- and 3'-3' linked cyclic dinucleotides (2'-3'-cGAMP, 3'-3'-cGAMP, 2',3'-cUAMP, 3',3'-cUAMP and/or 3',3'-c-di-GMP) second messengers produced by cGLRs in response to nucleotides in the cytosol, such as double-stranded RNA (dsRNA). Upon binding to cyclic dinucleotides, oligomerizes and promotes the recruitment and subsequent activation of the transcription factor IRF3 to induce expression of type I interferon. The chain is Stimulator of interferon genes protein 7 from Stylophora pistillata (Smooth cauliflower coral).